The chain runs to 163 residues: Nucleotide-binding protein CYB_0891 (163 aa).

This sequence belongs to the YajQ family.

Functionally, nucleotide-binding protein. The sequence is that of Nucleotide-binding protein CYB_0891 from Synechococcus sp. (strain JA-2-3B'a(2-13)) (Cyanobacteria bacterium Yellowstone B-Prime).